A 320-amino-acid chain; its full sequence is Cytochrome f (320 aa).

Positions 1–35 (MQTINTFSWIKEQITRSISISLILYIITRSSIANA) are cleaved as a signal peptide. Residues Tyr-36, Cys-56, Cys-59, and His-60 each coordinate heme. Residues 286–305 (IQGLLFFFASVILAQIFLVL) form a helical membrane-spanning segment.

The protein belongs to the cytochrome f family. As to quaternary structure, the 4 large subunits of the cytochrome b6-f complex are cytochrome b6, subunit IV (17 kDa polypeptide, petD), cytochrome f and the Rieske protein, while the 4 small subunits are PetG, PetL, PetM and PetN. The complex functions as a dimer. Requires heme as cofactor.

The protein resides in the plastid. It is found in the chloroplast thylakoid membrane. Component of the cytochrome b6-f complex, which mediates electron transfer between photosystem II (PSII) and photosystem I (PSI), cyclic electron flow around PSI, and state transitions. The protein is Cytochrome f (petA) of Spinacia oleracea (Spinach).